Reading from the N-terminus, the 155-residue chain is Calmodulin, flagellar (155 aa).

EF-hand domains are found at residues 14–49, 50–85, 87–122, and 123–155; these read EQIAEFKEAFSLFDKDGDGTITTSELGTVMRSLGQN, PTEAELHDMINEVDADGNGTIDFTEFLTMMAKKMKD, DNEEEIKEAFKVFDKDGNGFISAQELRHVMCNLGEK, and LTDEEVDEMIREADIDGDNQINYTEFVKMMMQK. Ca(2+) is bound by residues Asp27, Asp29, Asp31, Thr33, Glu38, Asp63, Asp65, Asn67, Thr69, Glu74, Asp100, Asp102, Asn104, Glu111, Asp136, Asp138, Asp140, Gln142, and Glu147.

The protein belongs to the calmodulin family.

It is found in the cell projection. It localises to the cilium. The protein localises to the flagellum. Its function is as follows. Calmodulin mediates the control of a large number of enzymes, ion channels and other proteins by Ca(2+). Among the enzymes to be stimulated by the calmodulin-Ca(2+) complex are a number of protein kinases and phosphatases. In Naegleria gruberi (Amoeba), this protein is Calmodulin, flagellar (CAM1).